A 258-amino-acid chain; its full sequence is Intron-associated endonuclease 2 (258 aa).

The 83-residue stretch at 14-96 (SVAFTYMVRF…RKYFNNEFIL (83 aa)) folds into the GIY-YIG domain.

In terms of biological role, this endonuclease is specific to the nrdD gene splice junction and is involved in intron homing. The sequence is that of Intron-associated endonuclease 2 (ITEVIIR) from Escherichia coli (Bacteriophage T4).